The primary structure comprises 120 residues: Glycine cleavage system H protein (120 aa).

The Lipoyl-binding domain occupies 19–101 (DGTVGITDHA…YEGGWLFKLE (83 aa)). N6-lipoyllysine is present on Lys-60.

Belongs to the GcvH family. In terms of assembly, the glycine cleavage system is composed of four proteins: P, T, L and H. (R)-lipoate serves as cofactor.

Its function is as follows. The glycine cleavage system catalyzes the degradation of glycine. The H protein shuttles the methylamine group of glycine from the P protein to the T protein. The protein is Glycine cleavage system H protein of Deinococcus deserti (strain DSM 17065 / CIP 109153 / LMG 22923 / VCD115).